We begin with the raw amino-acid sequence, 404 residues long: Type II restriction enzyme EcoRII (404 aa).

Tyr-308 is an active-site residue.

Homodimer. Mg(2+) is required as a cofactor.

The enzyme catalyses Endonucleolytic cleavage of DNA to give specific double-stranded fragments with terminal 5'-phosphates.. Functionally, an E and P subtype restriction enzyme that recognizes the double-stranded sequence 5'-CCWGG-3' and cleaves before C-1. The chain is Type II restriction enzyme EcoRII (ecoRIIR) from Escherichia coli.